The sequence spans 299 residues: Ribonuclease H2 subunit A (299 aa).

M1 bears the N-acetylmethionine mark. The RNase H type-2 domain occupies 28–250 (PCVLGVDEAG…AQTILEKEAE (223 aa)). D34, E35, and D141 together coordinate a divalent metal cation. Residues T204 and T216 each carry the phosphothreonine modification. A phosphoserine mark is found at S257 and S277.

It belongs to the RNase HII family. Eukaryotic subfamily. The RNase H2 complex is a heterotrimer composed of the catalytic subunit RNASEH2A and the non-catalytic subunits RNASEH2B and RNASEH2C. Requires Mn(2+) as cofactor. Mg(2+) is required as a cofactor.

It is found in the nucleus. It catalyses the reaction Endonucleolytic cleavage to 5'-phosphomonoester.. Functionally, catalytic subunit of RNase HII, an endonuclease that specifically degrades the RNA of RNA:DNA hybrids. Participates in DNA replication, possibly by mediating the removal of lagging-strand Okazaki fragment RNA primers during DNA replication. Mediates the excision of single ribonucleotides from DNA:RNA duplexes. The chain is Ribonuclease H2 subunit A (RNASEH2A) from Homo sapiens (Human).